Consider the following 215-residue polypeptide: Protein Thf1 (215 aa).

Positions Glu-182–Thr-213 form a coiled coil.

The protein belongs to the THF1 family.

In terms of biological role, may be involved in photosynthetic membrane biogenesis. The polypeptide is Protein Thf1 (Synechococcus sp. (strain CC9605)).